The sequence spans 372 residues: uncharacterized protein (372 aa).

An FAD-binding site is contributed by 4–18 (YIIVGAGILGASTAY).

It belongs to the DadA oxidoreductase family. FAD is required as a cofactor.

This is an uncharacterized protein from Bacillus subtilis (strain 168).